The sequence spans 296 residues: Protein csh3 (296 aa).

Residues 46–138 are disordered; it reads ASPVTAPAAQ…PPSYPGPNTA (93 aa). Residues 93 to 103 are compositionally biased toward basic and acidic residues; it reads GEKRTPEEPRK. The span at 111-124 shows a compositional bias: polar residues; sequence QKQSEASSVNSSTE. The region spanning 140 to 199 is the SH3 domain; it reads KNVERVLAMYDFPGPDAGDLGFHAGEVIIVLEHVNNDWWRGELNGKEGIFPSNYVRLLED. Positions 202 to 246 are disordered; it reads VKAQPPPPPPQQNYPPAASSSAPPMQYQQTAYPPQQAPYPPVQAY. Residues 205-214 show a composition bias toward pro residues; the sequence is QPPPPPPQQN. The span at 215–235 shows a compositional bias: low complexity; the sequence is YPPAASSSAPPMQYQQTAYPP.

This Schizosaccharomyces pombe (strain 972 / ATCC 24843) (Fission yeast) protein is Protein csh3 (csh3).